The following is a 364-amino-acid chain: DNA replication and repair protein RecF (364 aa).

ATP is bound at residue 30–37 (GNNAQGKT).

The protein belongs to the RecF family.

It localises to the cytoplasm. The RecF protein is involved in DNA metabolism; it is required for DNA replication and normal SOS inducibility. RecF binds preferentially to single-stranded, linear DNA. It also seems to bind ATP. The polypeptide is DNA replication and repair protein RecF (Clostridium botulinum (strain Langeland / NCTC 10281 / Type F)).